Here is a 483-residue protein sequence, read N- to C-terminus: Zinc metalloproteinase/disintegrin VMP-II (483 aa).

The first 20 residues, 1–20, serve as a signal peptide directing secretion; sequence MIQVLLVTLCLAAFPYQGNS. A propeptide spanning residues 21 to 191 is cleaved from the precursor; that stretch reads IILESGNVND…KASQLNLTPE (171 aa). The Peptidase M12B domain maps to 198-394; that stretch reads RYIELVVVAD…HNPQCMLNEP (197 aa). Ca(2+) contacts are provided by Glu-201 and Asp-285. Disulfide bonds link Cys-309–Cys-389, Cys-349–Cys-373, and Cys-351–Cys-356. His-334 contributes to the Zn(2+) binding site. Residue Glu-335 is part of the active site. 2 residues coordinate Zn(2+): His-338 and His-344. Ca(2+) is bound by residues Cys-389 and Asn-392. Residues 395–414 constitute a propeptide that is removed on maturation; sequence LRTDIVSTPVSGNELWETGE. Residues 402-483 form the Disintegrin domain; that stretch reads TPVSGNELWE…AGCPRNPFHA (82 aa). Disulfide bonds link Cys-425–Cys-448, Cys-439–Cys-445, Cys-444–Cys-469, and Cys-457–Cys-476. The Cell attachment site; atypical (KGD) signature appears at 461-463; that stretch reads KGD.

This sequence belongs to the venom metalloproteinase (M12B) family. P-II subfamily. P-IIe sub-subfamily. In terms of assembly, heterodimer; disulfide-linked (disintegrin). The cofactor is Zn(2+). In terms of tissue distribution, expressed by the venom gland.

The protein localises to the secreted. With respect to regulation, inhibited by EDTA and 1,10-phenanthroline, but not by PMSF. Functionally, has fibrinolytic activity. The recombinant enzyme cleaves both alpha- (FGA) and beta-chains (FGB) of fibrinogen, but not the gamma-chain. The recombinant protein does not produce hemorrhage in mice and does not have effect on ADP- or collagen-stimulated platelet aggregation. In terms of biological role, inhibits platelet aggregation induced by ADP, thrombin, platelet-activating factor and collagen. Acts by inhibiting fibrinogen interaction with platelet receptors GPIIb/GPIIIa (ITGA2B/ITGB3). The sequence is that of Zinc metalloproteinase/disintegrin VMP-II from Agkistrodon piscivorus leucostoma (Western cottonmouth).